A 280-amino-acid polypeptide reads, in one-letter code: uncharacterized protein (280 aa).

3 disordered regions span residues 20–41, 170–199, and 251–280; these read DVKK…QQQQ, INSP…KDKA, and GNSK…SFSF. The segment covering 25-41 has biased composition (low complexity); the sequence is QQQQQQQPQAPPQQQQQ. Over residues 178–199 the composition is skewed to basic and acidic residues; sequence EEEKPQLSKKEEPEWLKGKDKA.

This is an uncharacterized protein from Dictyostelium discoideum (Social amoeba).